We begin with the raw amino-acid sequence, 162 residues long: Phosphopantetheine adenylyltransferase (162 aa).

A substrate-binding site is contributed by Thr-14. Residues 14–15 (TF) and His-22 each bind ATP. Residues Lys-46, Leu-78, and Arg-92 each coordinate substrate. Residues 93 to 95 (GLR), Glu-103, and 128 to 134 (HSFISSS) contribute to the ATP site.

This sequence belongs to the bacterial CoaD family. In terms of assembly, homohexamer. Mg(2+) serves as cofactor.

It localises to the cytoplasm. The catalysed reaction is (R)-4'-phosphopantetheine + ATP + H(+) = 3'-dephospho-CoA + diphosphate. It functions in the pathway cofactor biosynthesis; coenzyme A biosynthesis; CoA from (R)-pantothenate: step 4/5. In terms of biological role, reversibly transfers an adenylyl group from ATP to 4'-phosphopantetheine, yielding dephospho-CoA (dPCoA) and pyrophosphate. This chain is Phosphopantetheine adenylyltransferase, found in Xylella fastidiosa (strain 9a5c).